The following is a 369-amino-acid chain: MNQTPDQARPTPRAGIMDIDAYVPGKSAAPAGVAKVYKLSSNENPLGPSPKAIEAAREVAARLDIYPDGTARRLREAIAEVHGLTAQNIICSNGSDEILGLLAQTYLAPGDEAIFTEHAFMVYKIYIQSAGAAPIAVKETDERADIDAMLAAVTPRTKIVFLANPNNPTGTYVPFQEVRRLHAGLPRHVLLVLDAAYAEYVRRNDYEAGIELVRSAENVVMTRTFSKIGLGGARIGWMYAPMHIVDAINRVRGPFNVNATAIEAGIAAIRDRAHVERSVTHNETWLTWLSQEMTGLGLRVTPSVGNFLLIHFPDDQKHSAAAADDYLTARGYILRRVSGYGFPNALRMTVGTEEANRGVVAALTTFLKS.

An N6-(pyridoxal phosphate)lysine modification is found at Lys-227.

This sequence belongs to the class-II pyridoxal-phosphate-dependent aminotransferase family. Histidinol-phosphate aminotransferase subfamily. As to quaternary structure, homodimer. Pyridoxal 5'-phosphate is required as a cofactor.

It carries out the reaction L-histidinol phosphate + 2-oxoglutarate = 3-(imidazol-4-yl)-2-oxopropyl phosphate + L-glutamate. It participates in amino-acid biosynthesis; L-histidine biosynthesis; L-histidine from 5-phospho-alpha-D-ribose 1-diphosphate: step 7/9. This Mesorhizobium japonicum (strain LMG 29417 / CECT 9101 / MAFF 303099) (Mesorhizobium loti (strain MAFF 303099)) protein is Histidinol-phosphate aminotransferase 2 (hisC2).